A 706-amino-acid polypeptide reads, in one-letter code: Putative pentatricopeptide repeat-containing protein At3g47840 (706 aa).

PPR repeat units follow at residues 39–69 (VKFDPNSHLRSLINAGNLRAARQVFDKMPHG), 70–104 (DIVSWTSIIKRYVTANNSDEALILFSAMRVVDHAV), 107–141 (DTSVLSVVLKACGQSSNIAYGESLHAYAVKTSLLS), 142–172 (SVYVGSSLLDMYKRVGKIDKSCRVFSEMPFR), 173–203 (NAVTWTAIITGLVHAGRYKEGLTYFSEMSRS), 208–242 (DTYTFAIALKACAGLRQVKYGKAIHTHVIVRGFVT), 243–273 (TLCVANSLATMYTECGEMQDGLCLFENMSER), 274–308 (DVVSWTSLIVAYKRIGQEVKAVETFIKMRNSQVPP), 309–343 (NEQTFASMFSACASLSRLVWGEQLHCNVLSLGLND), 344–374 (SLSVSNSMMKMYSTCGNLVSASVLFQGMRCR), 375–409 (DIISWSTIIGGYCQAGFGEEGFKYFSWMRQSGTKP), 410–444 (TDFALASLLSVSGNMAVIEGGRQVHALALCFGLEQ), 445–475 (NSTVRSSLINMYSKCGSIKEASMIFGETDRD), 476–510 (DIVSLTAMINGYAEHGKSKEAIDLFEKSLKVGFRP), 511–541 (DSVTFISVLTACTHSGQLDLGFHYFNMMQET), and 547–577 (AKEHYGCMVDLLCRAGRLSDAEKMINEMSWK). Residues 582-657 (VWTTLLIACK…EPGWSSIKIK (76 aa)) are type E motif. Residues 658–688 (DCVSAFVSGDRFHPQSEDIYNILELAVSGAE) are type E(+) motif.

This sequence belongs to the PPR family. PCMP-E subfamily.

The polypeptide is Putative pentatricopeptide repeat-containing protein At3g47840 (PCMP-E43) (Arabidopsis thaliana (Mouse-ear cress)).